Reading from the N-terminus, the 999-residue chain is Hypoxia up-regulated protein 1 (999 aa).

The N-terminal stretch at 1 to 32 (MAATVRRQRPRRLLCWTLVAVLLADLLALSDT) is a signal peptide. 3 N-linked (GlcNAc...) asparagine glycosylation sites follow: N155, N222, and N515. The disordered stretch occupies residues 564–694 (VEDSPEEEST…KKQKPARKQK (131 aa)). The residue at position 567 (S567) is a Phosphoserine. Residues 574–583 (LTKLGNTISS) are compositionally biased toward polar residues. N-linked (GlcNAc...) asparagine glycosylation is present at N596. 2 stretches are compositionally biased toward basic and acidic residues: residues 611–626 (GSKD…KEET) and 641–670 (PKGD…EEKG). N-linked (GlcNAc...) asparagine glycosylation is found at N830, N862, and N869. At K883 the chain carries N6-acetyllysine. The segment at 909–999 (AKFTKPRPRP…QKRSSKNDEL (91 aa)) is disordered. N-linked (GlcNAc...) asparagine glycosylation is found at N922 and N931. A compositionally biased stretch (basic and acidic residues) spans 949-962 (EEAKPILEPDKEET). A Prevents secretion from ER motif is present at residues 996 to 999 (NDEL).

Belongs to the heat shock protein 70 family. As to quaternary structure, part of a large chaperone multiprotein complex comprising DNAJB11, HSP90B1, HSPA5, HYOU, PDIA2, PDIA4, PDIA6, PPIB, SDF2L1, UGGT1 and very small amounts of ERP29, but not, or at very low levels, CALR nor CANX.

It is found in the endoplasmic reticulum lumen. Has a pivotal role in cytoprotective cellular mechanisms triggered by oxygen deprivation. Promotes HSPA5/BiP-mediated ATP nucleotide exchange and thereby activates the unfolded protein response (UPR) pathway in the presence of endoplasmic reticulum stress. May play a role as a molecular chaperone and participate in protein folding. The protein is Hypoxia up-regulated protein 1 (HYOU1) of Cricetulus griseus (Chinese hamster).